The sequence spans 181 residues: Protein GrpE (181 aa).

A compositionally biased stretch (acidic residues) spans 1 to 24 (MSEENIGENEVETPETEPSAEAEV). The disordered stretch occupies residues 1-26 (MSEENIGENEVETPETEPSAEAEVES).

This sequence belongs to the GrpE family. As to quaternary structure, homodimer.

The protein resides in the cytoplasm. Its function is as follows. Participates actively in the response to hyperosmotic and heat shock by preventing the aggregation of stress-denatured proteins, in association with DnaK and GrpE. It is the nucleotide exchange factor for DnaK and may function as a thermosensor. Unfolded proteins bind initially to DnaJ; upon interaction with the DnaJ-bound protein, DnaK hydrolyzes its bound ATP, resulting in the formation of a stable complex. GrpE releases ADP from DnaK; ATP binding to DnaK triggers the release of the substrate protein, thus completing the reaction cycle. Several rounds of ATP-dependent interactions between DnaJ, DnaK and GrpE are required for fully efficient folding. The polypeptide is Protein GrpE (Rhizorhabdus wittichii (strain DSM 6014 / CCUG 31198 / JCM 15750 / NBRC 105917 / EY 4224 / RW1) (Sphingomonas wittichii)).